A 693-amino-acid polypeptide reads, in one-letter code: Triadin (693 aa).

The Cytoplasmic portion of the chain corresponds to 1–47 (MTEITAEGNASTTTTVIDNKNGCIPKSPGKVLKRSVTEDIVTTFSSP). Residues 48–68 (AAWLLVIALIITWSAVAIVMF) form a helical membrane-spanning segment. The Lumenal segment spans residues 69 to 693 (DLVDYKNFSA…NSPGQKQQEQ (625 aa)). Acidic residues predominate over residues 117 to 130 (EGDEDDEDADEDID). Disordered stretches follow at residues 117–260 (EGDE…AVHE), 278–649 (GDLK…QTRP), and 666–693 (FQFP…QQEQ). Composition is skewed to basic and acidic residues over residues 131–241 (KGEI…KETP) and 249–260 (KKDDKEMPAVHE). Serine 301 is subject to Phosphoserine. Basic and acidic residues predominate over residues 305 to 352 (LEEKEKEEKKKMEKKDTSDTKKKEKEVKKKSEETTIDGKGKEPGKPPE). The span at 354–364 (KQMTAKLTTQA) shows a compositional bias: polar residues. Composition is skewed to basic and acidic residues over residues 366–427 (ARKD…KEEI) and 438–502 (GKKE…KEAK). Asparagine 515 carries N-linked (GlcNAc...) asparagine glycosylation. Basic and acidic residues-rich tracts occupy residues 526–547 (VKPE…DKPK) and 558–579 (DSGK…REEN). Asparagine 584 carries N-linked (GlcNAc...) asparagine glycosylation. The segment covering 587–637 (KAEKPGKIPKDSKEAPASKKDKEDSKEAPTSKKDKEDSKDVPHSKKDKEVT) has biased composition (basic and acidic residues). Polar residues predominate over residues 672 to 693 (PVQQPGENPGKTNSPGQKQQEQ).

As to quaternary structure, homooligomer of variable subunit number; disulfide-linked. Interacts with CASQ1 and RYR1 in skeletal muscle. Interacts with CASQ2. Post-translationally, phosphorylated by CaMK2. N-glycosylated. Detected in heart (at protein level). Detected in heart.

The protein localises to the sarcoplasmic reticulum membrane. In terms of biological role, contributes to the regulation of lumenal Ca2+ release via the sarcoplasmic reticulum calcium release channels RYR1 and RYR2, a key step in triggering skeletal and heart muscle contraction. Required for normal organization of the triad junction, where T-tubules and the sarcoplasmic reticulum terminal cisternae are in close contact. Required for normal skeletal muscle strength. Plays a role in excitation-contraction coupling in the heart and in regulating the rate of heart beats. The sequence is that of Triadin from Mus musculus (Mouse).